A 155-amino-acid polypeptide reads, in one-letter code: Large ribosomal subunit protein eL24 (155 aa).

The segment at 119-155 (VKAAKKAAAPAPAKKSAPKQKAAKVTQKAAPRVGGKR) is disordered. Residues 124-133 (KAAAPAPAKK) show a composition bias toward low complexity.

The protein belongs to the eukaryotic ribosomal protein eL24 family.

This chain is Large ribosomal subunit protein eL24 (RpL24), found in Drosophila melanogaster (Fruit fly).